The following is an 89-amino-acid chain: UPF0175 protein ssl1255 (89 aa).

Belongs to the UPF0175 family.

This is UPF0175 protein ssl1255 from Synechocystis sp. (strain ATCC 27184 / PCC 6803 / Kazusa).